Consider the following 560-residue polypeptide: General negative regulator of transcription subunit 5 (560 aa).

3 coiled-coil regions span residues 3–26 (QRKLQQDIDKLLKKVKEGIEDFDD), 37–71 (SNSSHREKLESDLKREIKKLQKHRDQIKTWLSKED), and 124–177 (KRDQ…NEMD). Residues 212-330 (CEIQPSSSNN…DSEQQLNFPP (119 aa)) form a disordered region. Residues 215–237 (QPSSSNNEAPKEGNNQTSLSSIR) show a composition bias toward polar residues. Residues 273–288 (SQSISSTPTPVSTDTP) are compositionally biased toward low complexity. Positions 299-311 (FDNSTLGTPTTHV) are enriched in polar residues. Threonine 306 bears the Phosphothreonine mark. Lysine 338 participates in a covalent cross-link: Glycyl lysine isopeptide (Lys-Gly) (interchain with G-Cter in ubiquitin). Serine 377 bears the Phosphoserine mark.

Belongs to the CNOT2/3/5 family. As to quaternary structure, forms a NOT protein complex that comprises NOT1, NOT2, NOT3, NOT4 and NOT5. Subunit of the 1.0 MDa CCR4-NOT core complex that contains CCR4, CAF1, NOT1, NOT2, NOT3, NOT4, NOT5, CAF40 and CAF130. In the complex interacts with NOT1 and NOT2. The core complex probably is part of a less characterized 1.9 MDa CCR4-NOT complex.

Its subcellular location is the cytoplasm. It localises to the nucleus. Functionally, acts as a component of the CCR4-NOT core complex, which in the nucleus seems to be a general transcription factor, and in the cytoplasm the major mRNA deadenylase involved in mRNA turnover. The NOT protein subcomplex negatively regulates the basal and activated transcription of many genes. Preferentially affects TC-type TATA element-dependent transcription. Could directly or indirectly inhibit component(s) of the general transcription machinery. In Saccharomyces cerevisiae (strain ATCC 204508 / S288c) (Baker's yeast), this protein is General negative regulator of transcription subunit 5 (NOT5).